A 418-amino-acid chain; its full sequence is CinA-like protein (418 aa).

The protein belongs to the CinA family.

This chain is CinA-like protein, found in Cyanothece sp. (strain PCC 7425 / ATCC 29141).